The chain runs to 320 residues: Thymidylate synthase (320 aa).

Residues R27 and 182–183 contribute to the dUMP site; that span reads RR. The active-site Nucleophile is C202. DUMP is bound by residues 222 to 225, N233, and 263 to 265; these read RSAD and HIY. D225 provides a ligand contact to (6R)-5,10-methylene-5,6,7,8-tetrahydrofolate. Residue A319 coordinates (6R)-5,10-methylene-5,6,7,8-tetrahydrofolate.

This sequence belongs to the thymidylate synthase family. Bacterial-type ThyA subfamily. As to quaternary structure, homodimer.

Its subcellular location is the cytoplasm. It carries out the reaction dUMP + (6R)-5,10-methylene-5,6,7,8-tetrahydrofolate = 7,8-dihydrofolate + dTMP. It functions in the pathway pyrimidine metabolism; dTTP biosynthesis. In terms of biological role, catalyzes the reductive methylation of 2'-deoxyuridine-5'-monophosphate (dUMP) to 2'-deoxythymidine-5'-monophosphate (dTMP) while utilizing 5,10-methylenetetrahydrofolate (mTHF) as the methyl donor and reductant in the reaction, yielding dihydrofolate (DHF) as a by-product. This enzymatic reaction provides an intracellular de novo source of dTMP, an essential precursor for DNA biosynthesis. In Limosilactobacillus reuteri (strain DSM 20016) (Lactobacillus reuteri), this protein is Thymidylate synthase.